The sequence spans 261 residues: Small ribosomal subunit protein mS23 (261 aa).

A disordered region spans residues 234-261 (NPSESWATDEKDPKKNDDIEEDVEEIKL). The segment covering 241-250 (TDEKDPKKND) has biased composition (basic and acidic residues). Residues 251–261 (DIEEDVEEIKL) are compositionally biased toward acidic residues.

It belongs to the mitochondrion-specific ribosomal protein mS23 family. Component of the mitochondrial small ribosomal subunit.

The protein resides in the mitochondrion. The polypeptide is Small ribosomal subunit protein mS23 (RSM25) (Vanderwaltozyma polyspora (strain ATCC 22028 / DSM 70294 / BCRC 21397 / CBS 2163 / NBRC 10782 / NRRL Y-8283 / UCD 57-17) (Kluyveromyces polysporus)).